A 132-amino-acid chain; its full sequence is Small ribosomal subunit protein uS8 (132 aa).

It belongs to the universal ribosomal protein uS8 family. As to quaternary structure, part of the 30S ribosomal subunit. Contacts proteins S5 and S12.

One of the primary rRNA binding proteins, it binds directly to 16S rRNA central domain where it helps coordinate assembly of the platform of the 30S subunit. In Rhodopseudomonas palustris (strain BisA53), this protein is Small ribosomal subunit protein uS8.